The following is a 354-amino-acid chain: Lysophosphatidic acid receptor 3 (354 aa).

Topologically, residues 1-31 (MNECHYDKRMDFFYNRSNTDTADEWTGTKLV) are extracellular. A glycan (N-linked (GlcNAc...) asparagine) is linked at Asn-15. Residues 32 to 52 (IVLCVGTFFCLFIFFSNSLVI) traverse the membrane as a helical segment. Residues 53–67 (AAVITNRKFHFPFYY) lie on the Cytoplasmic side of the membrane. The chain crosses the membrane as a helical span at residues 68 to 88 (LLANLAAADFFAGIAYVFLMF). The Extracellular segment spans residues 89 to 101 (NTGPVSKTLTVNR). The chain crosses the membrane as a helical span at residues 102-124 (WLLRQGLLDTSLTASLANLLVIA). Over 125–146 (VERHMSIMRMRIHSNLTKKRVT) the chain is Cytoplasmic. A helical transmembrane segment spans residues 147-167 (LLILLVWAIAIFMGAVPTLGW). The Extracellular segment spans residues 168–186 (NCLCNISACSSLAPIYSRS). The N-linked (GlcNAc...) asparagine glycan is linked to Asn-172. A helical transmembrane segment spans residues 187 to 207 (YLIFWTVSNLLAFFIMVVVYV). Residues 208–240 (RIYMYVKRKTNVLSPHTSGSISRRRAPMKLMKT) are Cytoplasmic-facing. A helical membrane pass occupies residues 241-261 (VMTVLGAFVVCWTPGLVVLLL). Over 262-276 (DGLNCKQCNVQHVKR) the chain is Extracellular. A helical transmembrane segment spans residues 277 to 295 (WFLLLALLNSVMNPIIYSY). The Cytoplasmic portion of the chain corresponds to 296 to 354 (KDEDMYNTMRKMICCAPHDSNAERHPSRIPSTIHSRSDTGSQYLEDSISQGQVCNKSSS). A lipid anchor (S-palmitoyl cysteine) is attached at Cys-309.

Belongs to the G-protein coupled receptor 1 family.

The protein resides in the cell membrane. Its function is as follows. Receptor for lysophosphatidic acid (LPA), a mediator of diverse cellular activities. Seems to be coupled to the G(i)/G(o) and G(q) families of heteromeric G proteins. The chain is Lysophosphatidic acid receptor 3 (Lpar3) from Rattus norvegicus (Rat).